Here is a 110-residue protein sequence, read N- to C-terminus: Putative anti-sigma factor antagonist TM_1442 (110 aa).

The region spanning 4–110 (LKLDIVEQDD…FKITDTVEEA (107 aa)) is the STAS domain. Ser59 bears the Phosphoserine mark.

The protein belongs to the anti-sigma-factor antagonist family. Phosphorylated on a serine residue.

Its function is as follows. In the phosphorylated form it could act as an anti-anti-sigma factor that counteracts an anti-sigma factor and thus releases a sigma factor from inhibition. The polypeptide is Putative anti-sigma factor antagonist TM_1442 (Thermotoga maritima (strain ATCC 43589 / DSM 3109 / JCM 10099 / NBRC 100826 / MSB8)).